We begin with the raw amino-acid sequence, 645 residues long: DNA ligase (645 aa).

NAD(+)-binding positions include 30-34 and 72-73; these read DAEFD and SQ. Lys99 (N6-AMP-lysine intermediate) is an active-site residue. 4 residues coordinate NAD(+): Arg120, Glu163, Lys275, and Lys296. Residues Cys387, Cys390, Cys403, and Cys408 each contribute to the Zn(2+) site. The region spanning 564–645 is the BRCT domain; sequence EEGAVLKGLS…EAFLNLIGKV (82 aa).

It belongs to the NAD-dependent DNA ligase family. LigA subfamily. It depends on Mg(2+) as a cofactor. The cofactor is Mn(2+).

The catalysed reaction is NAD(+) + (deoxyribonucleotide)n-3'-hydroxyl + 5'-phospho-(deoxyribonucleotide)m = (deoxyribonucleotide)n+m + AMP + beta-nicotinamide D-nucleotide.. Functionally, DNA ligase that catalyzes the formation of phosphodiester linkages between 5'-phosphoryl and 3'-hydroxyl groups in double-stranded DNA using NAD as a coenzyme and as the energy source for the reaction. It is essential for DNA replication and repair of damaged DNA. In Treponema denticola (strain ATCC 35405 / DSM 14222 / CIP 103919 / JCM 8153 / KCTC 15104), this protein is DNA ligase.